The chain runs to 719 residues: Pesticidal crystal protein Cry1Ia (719 aa).

Belongs to the delta endotoxin family.

Promotes colloidosmotic lysis by binding to the midgut epithelial cells of certain coleopteran and lepidopteran species. Active on Plutella xylostella and Bombyx mori. The chain is Pesticidal crystal protein Cry1Ia (cry1Ia) from Bacillus thuringiensis subsp. kurstaki.